We begin with the raw amino-acid sequence, 2036 residues long: Bikaverin polyketide synthase bik1 (2036 aa).

Residues 8–242 form an N-terminal acylcarrier protein transacylase domain (SAT) region; the sequence is YVFGDQSTPV…YPAPIYGPYH (235 aa). Positions 370 to 801 constitute a Ketosynthase family 3 (KS3) domain; the sequence is ENKIAIIGFS…GGNTSLLLED (432 aa). Active-site for beta-ketoacyl synthase activity residues include cysteine 541, histidine 676, and histidine 718. The tract at residues 908-1209 is acyl/malonyl transferases; it reads FLFTGQGAQE…LASLRRKEDH (302 aa). The For acyl/malonyl transferase activity role is filled by serine 997. Residues 1293–1425 are N-terminal hotdog fold; that stretch reads HNVIEQVHGD…CDVAVENPSS (133 aa). The PKS/mFAS DH domain maps to 1293 to 1600; that stretch reads HNVIEQVHGD…FKKVARKVLE (308 aa). Positions 1295–1599 are product template (PT) domain; sequence VIEQVHGDKR…TFKKVARKVL (305 aa). The Proton acceptor; for dehydratase activity role is filled by histidine 1325. A C-terminal hotdog fold region spans residues 1452-1600; that stretch reads SAHMMRRGLL…FKKVARKVLE (149 aa). The Proton donor; for dehydratase activity role is filled by aspartate 1511. Residues 1628 to 1654 are disordered; it reads VLTPPSTTSHSVGTTSPPEPTESPVGS. Residues 1638 to 1654 are compositionally biased toward low complexity; it reads SVGTTSPPEPTESPVGS. Residues 1653–1730 enclose the Carrier domain; sequence GSASGLIQKA…DLKSFLGAND (78 aa). An O-(pantetheine 4'-phosphoryl)serine modification is found at serine 1690. A disordered region spans residues 1733–1758; that stretch reads FSSSNSEAESSASSAASTSPSDHGDD. The span at 1734-1753 shows a compositional bias: low complexity; the sequence is SSSNSEAESSASSAASTSPS. Serine 1857 serves as the catalytic For thioesterase activity.

It functions in the pathway secondary metabolite biosynthesis. In terms of biological role, polyketide synthase; part of the gene cluster that mediates the biosynthesis of bikaverin, a red pigment also considered as a mycotoxin. The first stage is catalyzed by the polyketide synthase bik1, which catalyzes the formation of the intermediate SMA76a also knowm as pre-bikaverin. FAD-dependent monooxygenase bik2 might then be responsible for the oxidation of pre-bikaverin to oxo-pre-bikaverin which is in turn methylated by the O-methyltransferase bik3 to me-oxo-pre-bikaverin. A further cycle of oxydation and methylation by bik2 and bik3 leads to the final product of bikaverin, via a nor-bikaverin intermediate. This is Bikaverin polyketide synthase bik1 from Gibberella fujikuroi (strain CBS 195.34 / IMI 58289 / NRRL A-6831) (Bakanae and foot rot disease fungus).